Consider the following 651-residue polypeptide: Acetyl-coenzyme A synthetase (651 aa).

CoA-binding positions include 189 to 192 (RGGK), Thr311, and Asn335. ATP is bound by residues 387-389 (GEP), 411-416 (DTWWQT), Asp500, and Arg515. A CoA-binding site is contributed by Ser523. Residue Arg526 coordinates ATP. The Mg(2+) site is built by Val537, His539, and Val542. CoA is bound at residue Arg584. Lys609 carries the N6-acetyllysine modification.

Belongs to the ATP-dependent AMP-binding enzyme family. It depends on Mg(2+) as a cofactor. Acetylated. Deacetylation by the SIR2-homolog deacetylase activates the enzyme.

The enzyme catalyses acetate + ATP + CoA = acetyl-CoA + AMP + diphosphate. Its function is as follows. Catalyzes the conversion of acetate into acetyl-CoA (AcCoA), an essential intermediate at the junction of anabolic and catabolic pathways. AcsA undergoes a two-step reaction. In the first half reaction, AcsA combines acetate with ATP to form acetyl-adenylate (AcAMP) intermediate. In the second half reaction, it can then transfer the acetyl group from AcAMP to the sulfhydryl group of CoA, forming the product AcCoA. This is Acetyl-coenzyme A synthetase from Rhizobium etli (strain ATCC 51251 / DSM 11541 / JCM 21823 / NBRC 15573 / CFN 42).